Here is a 659-residue protein sequence, read N- to C-terminus: MQTDEPTGTATSAIRIPPLISLRTTLMVAGLLGNVVAVAAYGLFSRTERYGAVGNPDPGSFIGVAEPVGYFGASLSSALCLGALIYFVMMVWPQADGLIDAQAFRIHLAEERVSIGWLAFALTMVVVQAANDSGVTPAELRTGAALFNAITTSETSRAWIVVTICALLVTLTLRVIIRYSDHFVLLIPAVIGVIATAVTGNAGQGPDHDYATSAVIVFALAIAALSGLKITAALTEVTPSRAVLIVQVVCGVLALAYGAELVYLLSPGAAMIDSDFGRLGLVAGVLVTLVCFSDCWALVMGRPHSDHRTRLTALAMMAVTAATAAMSVQTAPRFLTHRFTAWDVFLGYELPQPPNIVRFFTVWRFDSLIGATAIVLGIGYVAGFVRVRRAGNTWPVGRLVAWLTGCVALVFTSSSGVRTYGSAMFSVHMAEHMTLNMFIPVLLVLGGPVTLALRALSAAGDGQQPGPREWLTWLMHSSVTAFLSHPVTNFILFVGSPYIVYFTPLFDTLVRYHWGHEFMAIHFLLVGYIFYWAIIGIDPGPRRLPYLARIGLLFAVMPFHAFFGIALMTMTSAISAEFYRSVNLPWLASIDADQHIGGAIAWSATELPVIIVIVALMAQWARQDHRVAVREDRHADSTYADDDLNAYNAMLRELSRMRR.

Helical transmembrane passes span 24–44 (TTLM…YGLF), 71–91 (FGAS…VMMV), 115–135 (IGWL…DSGV), 157–177 (RAWI…RVII), 183–203 (FVLL…GNAG), 214–234 (AVIV…TAAL), 242–262 (AVLI…AELV), 279–299 (LGLV…WALV), 311–331 (LTAL…VQTA), 365–385 (FDSL…AGFV), 393–413 (TWPV…VFTS), 433–453 (MTLN…TLAL), 490–510 (FILF…DTLV), 517–537 (EFMA…IIGI), 550–570 (IGLL…LMTM), and 596–616 (IGGA…IVAL).

It to M.tuberculosis Rv0102.

It localises to the cell membrane. This is an uncharacterized protein from Mycobacterium leprae (strain TN).